The sequence spans 444 residues: Multidrug resistance protein MdtA (444 aa).

The first 20 residues, 1 to 20 (MKSQSKRTSRLFVFVGVVVA), serve as a signal peptide directing secretion. Polar residues predominate over residues 37 to 52 (NNTSGAQQSARGQDTS). Disordered regions lie at residues 37–60 (NNTS…RNTP) and 398–444 (TPRS…AEKS). The segment covering 409 to 419 (ASAEKAAAEAE) has biased composition (low complexity). Polar residues predominate over residues 435–444 (ARSTTAAEKS).

It belongs to the membrane fusion protein (MFP) (TC 8.A.1) family. Part of a tripartite efflux system composed of MdtA, MdtB and MdtC.

It is found in the cell inner membrane. The sequence is that of Multidrug resistance protein MdtA from Yersinia pseudotuberculosis serotype O:3 (strain YPIII).